Here is an 87-residue protein sequence, read N- to C-terminus: MSGISPTELQNLDEPSKKEIMGFLETENSKQKVQMSIHQFTNLCFKNCIHSVQSADLSAQENQCLKDCVNRFLDTNIRIVKGLQSIQ.

A Twin CX3C motif motif is present at residues 44–68 (CFKNCIHSVQSADLSAQENQCLKDC). Cystine bridges form between Cys44–Cys68 and Cys48–Cys64.

This sequence belongs to the small Tim family. Heterohexamer; composed of 3 copies of TIM8 and 3 copies of TIM13, named soluble 70 kDa complex. Associates with the TIM22 complex, whose core is composed of TIM22 and TIM54. Interacts with the transmembrane regions of multi-pass transmembrane proteins in transit.

It is found in the mitochondrion inner membrane. Its function is as follows. Mitochondrial intermembrane chaperone that participates in the import and insertion of some multi-pass transmembrane proteins into the mitochondrial inner membrane. Also required for the transfer of beta-barrel precursors from the TOM complex to the sorting and assembly machinery (SAM complex) of the outer membrane. Acts as a chaperone-like protein that protects the hydrophobic precursors from aggregation and guide them through the mitochondrial intermembrane space. The TIM8-TIM13 complex is non essential and only mediates the import of few proteins, while the predominant TIM9-TIM10 70 kDa complex is crucial and mediates the import of much more proteins. The chain is Mitochondrial import inner membrane translocase subunit TIM8 (TIM8) from Eremothecium gossypii (strain ATCC 10895 / CBS 109.51 / FGSC 9923 / NRRL Y-1056) (Yeast).